The sequence spans 377 residues: Chaperone protein DnaJ (377 aa).

Residues 5–70 (DYYEVLGVGK…EKKAAYDQYG (66 aa)) form the J domain. A CR-type zinc finger spans residues 137–215 (GHEAQIRVPH…CHGQGKLKSQ (79 aa)). Zn(2+) is bound by residues C150, C153, C167, C170, C189, C192, C203, and C206. CXXCXGXG motif repeat units follow at residues 150–157 (CDHCHGNG), 167–174 (CPTCHGAG), 189–196 (CPKCHGSG), and 203–210 (CTKCHGQG).

This sequence belongs to the DnaJ family. As to quaternary structure, homodimer. Zn(2+) is required as a cofactor.

It localises to the cytoplasm. Functionally, participates actively in the response to hyperosmotic and heat shock by preventing the aggregation of stress-denatured proteins and by disaggregating proteins, also in an autonomous, DnaK-independent fashion. Unfolded proteins bind initially to DnaJ; upon interaction with the DnaJ-bound protein, DnaK hydrolyzes its bound ATP, resulting in the formation of a stable complex. GrpE releases ADP from DnaK; ATP binding to DnaK triggers the release of the substrate protein, thus completing the reaction cycle. Several rounds of ATP-dependent interactions between DnaJ, DnaK and GrpE are required for fully efficient folding. Also involved, together with DnaK and GrpE, in the DNA replication of plasmids through activation of initiation proteins. This chain is Chaperone protein DnaJ, found in Cupriavidus taiwanensis (strain DSM 17343 / BCRC 17206 / CCUG 44338 / CIP 107171 / LMG 19424 / R1) (Ralstonia taiwanensis (strain LMG 19424)).